A 45-amino-acid polypeptide reads, in one-letter code: Cytochrome b559 subunit beta (45 aa).

A helical membrane pass occupies residues 20 to 36; it reads WLAVHTLGVPTVFFLGA. His24 is a heme binding site.

This sequence belongs to the PsbE/PsbF family. As to quaternary structure, heterodimer of an alpha subunit and a beta subunit. PSII is composed of 1 copy each of membrane proteins PsbA, PsbB, PsbC, PsbD, PsbE, PsbF, PsbH, PsbI, PsbJ, PsbK, PsbL, PsbM, PsbT, PsbX, PsbY, PsbZ, Psb30/Ycf12, peripheral proteins PsbO, CyanoQ (PsbQ), PsbU, PsbV and a large number of cofactors. It forms dimeric complexes. It depends on heme b as a cofactor.

It localises to the cellular thylakoid membrane. Functionally, this b-type cytochrome is tightly associated with the reaction center of photosystem II (PSII). PSII is a light-driven water:plastoquinone oxidoreductase that uses light energy to abstract electrons from H(2)O, generating O(2) and a proton gradient subsequently used for ATP formation. It consists of a core antenna complex that captures photons, and an electron transfer chain that converts photonic excitation into a charge separation. The sequence is that of Cytochrome b559 subunit beta from Nostoc punctiforme (strain ATCC 29133 / PCC 73102).